Reading from the N-terminus, the 369-residue chain is Developmentally-regulated G-protein 3 (369 aa).

Residues 66-291 (SRVGLVGFPS…LLDKIWEYLD (226 aa)) form the OBG-type G domain. Residues 72-79 (GFPSVGKS), 118-122 (DLPGI), and 249-252 (NKID) each bind GTP. The region spanning 291–367 (DLTRIYTKPK…EDEDVVQIVK (77 aa)) is the TGS domain.

The protein belongs to the TRAFAC class OBG-HflX-like GTPase superfamily. OBG GTPase family.

Its function is as follows. Binds GDP and GTP, and has low GTPase activity in vitro. This Arabidopsis thaliana (Mouse-ear cress) protein is Developmentally-regulated G-protein 3 (DRG3).